The chain runs to 148 residues: MKALLILGLLLFSVAVQGKVFERCELARSLKRFGMDNFRGISLANWMCLARWESNYNTQATNYNAGDQSTDYGIFQINSHWWCNDGKTPGAVNACHLPCGALLQDDITQAVACAKRVVSDPQGIRAWVAWRSHCQNQDLTSYIQGCGV.

The first 18 residues, 1 to 18, serve as a signal peptide directing secretion; sequence MKALLILGLLLFSVAVQG. Residues 19 to 148 enclose the C-type lysozyme domain; that stretch reads KVFERCELAR…LTSYIQGCGV (130 aa). 4 disulfides stabilise this stretch: C24–C146, C48–C134, C83–C99, and C95–C113. Active-site residues include E53 and D71.

It belongs to the glycosyl hydrolase 22 family. In terms of tissue distribution, expressed in blood cells.

It carries out the reaction Hydrolysis of (1-&gt;4)-beta-linkages between N-acetylmuramic acid and N-acetyl-D-glucosamine residues in a peptidoglycan and between N-acetyl-D-glucosamine residues in chitodextrins.. In terms of biological role, lysozymes have primarily a bacteriolytic function; those in tissues and body fluids are associated with the monocyte-macrophage system and enhance the activity of immunoagents. The chain is Lysozyme C, non-stomach isozyme (LYS) from Bos taurus (Bovine).